A 463-amino-acid polypeptide reads, in one-letter code: Putative dipeptidase YtjP (463 aa).

A Zn(2+)-binding site is contributed by His85. Asp87 is an active-site residue. Residue Asp116 participates in Zn(2+) binding. Catalysis depends on Glu150, which acts as the Proton acceptor. Zn(2+)-binding residues include Glu151, Asp174, and His436.

It belongs to the peptidase M20A family. Requires Zn(2+) as cofactor.

The protein is Putative dipeptidase YtjP (ytjP) of Bacillus subtilis (strain 168).